The sequence spans 162 residues: uncharacterized protein (162 aa).

The first 23 residues, 1–23 (MLSLKSPAVLLSMVILVPLFALA), serve as a signal peptide directing secretion.

This is an uncharacterized protein from Mycosarcoma maydis (Corn smut fungus).